A 439-amino-acid polypeptide reads, in one-letter code: Histidinol dehydrogenase (439 aa).

Residues tyrosine 132, glutamine 194, and asparagine 217 each contribute to the NAD(+) site. Residues serine 244, glutamine 266, and histidine 269 each coordinate substrate. Glutamine 266 and histidine 269 together coordinate Zn(2+). Catalysis depends on proton acceptor residues glutamate 335 and histidine 336. Residues histidine 336, aspartate 369, glutamate 423, and histidine 428 each contribute to the substrate site. Residue aspartate 369 coordinates Zn(2+). Residue histidine 428 coordinates Zn(2+).

The protein belongs to the histidinol dehydrogenase family. Zn(2+) is required as a cofactor.

It carries out the reaction L-histidinol + 2 NAD(+) + H2O = L-histidine + 2 NADH + 3 H(+). Its pathway is amino-acid biosynthesis; L-histidine biosynthesis; L-histidine from 5-phospho-alpha-D-ribose 1-diphosphate: step 9/9. Catalyzes the sequential NAD-dependent oxidations of L-histidinol to L-histidinaldehyde and then to L-histidine. In Schizosaccharomyces pombe (strain 972 / ATCC 24843) (Fission yeast), this protein is Histidinol dehydrogenase (his2).